A 261-amino-acid chain; its full sequence is Homeobox-leucine zipper protein HOX24 (261 aa).

Disordered stretches follow at residues alanine 42–arginine 67 and lysine 160–methionine 188. Residues glycine 46–glycine 61 show a composition bias toward gly residues. The segment at residues glycine 61–glutamine 121 is a DNA-binding region (homeobox). The leucine-zipper stretch occupies residues lysine 120–arginine 164.

It belongs to the HD-ZIP homeobox family. Class I subfamily. Expressed in roots and panicles.

It is found in the nucleus. Its function is as follows. Probable transcription factor. The chain is Homeobox-leucine zipper protein HOX24 (HOX24) from Oryza sativa subsp. japonica (Rice).